A 340-amino-acid chain; its full sequence is Proline-rich transmembrane protein 2 (340 aa).

Residues 1-261 (MAASSSEISE…AGPGVEGGEG (261 aa)) are disordered. The Cytoplasmic portion of the chain corresponds to 1-268 (MAASSSEISE…GEGTQKPRDY (268 aa)). Basic and acidic residues predominate over residues 9 to 18 (SEMKGVEESP). The residue at position 28 (serine 28) is a Phosphoserine. Threonine 74 carries the phosphothreonine modification. Composition is skewed to pro residues over residues 131-155 (PPEPAPEPAPQPDPRPDSQPTPKPA) and 197-207 (APEPHSPPSKK). Serine 238 carries the phosphoserine modification. Arginine 240 is subject to Omega-N-methylarginine. Residues serine 248 and serine 249 each carry the phosphoserine modification. Positions 269–289 (IILAILSCFCPMWPVNIVAFA) form an intramembrane region, helical. Residues 290–317 (YAVMSRNSLQQGDVDGAQRLGRVAKLLS) lie on the Cytoplasmic side of the membrane. A helical membrane pass occupies residues 318–338 (IVALVGGVLIIIASCVINLGV). At 339–340 (YK) the chain is on the extracellular side.

Belongs to the CD225/Dispanin family. As to quaternary structure, component of the outer core of AMPAR complex. AMPAR complex consists of an inner core made of 4 pore-forming GluA/GRIA proteins (GRIA1, GRIA2, GRIA3 and GRIA4) and 4 major auxiliary subunits arranged in a twofold symmetry. One of the two pairs of distinct binding sites is occupied either by CNIH2, CNIH3 or CACNG2, CACNG3. The other harbors CACNG2, CACNG3, CACNG4, CACNG8 or GSG1L. This inner core of AMPAR complex is complemented by outer core constituents binding directly to the GluA/GRIA proteins at sites distinct from the interaction sites of the inner core constituents. Outer core constituents include at least PRRT1, PRRT2, CKAMP44/SHISA9, FRRS1L and NRN1. The proteins of the inner and outer core serve as a platform for other, more peripherally associated AMPAR constituents. Alone or in combination, these auxiliary subunits control the gating and pharmacology of the AMPAR complex and profoundly impact their biogenesis and protein processing. Interacts with intersectin 1/ITSN1. Interacts with SNARE complex components, including SNAP25, STX1A, SYT1 and SYT2; this interaction may inhibit SNARE complex formation.

The protein localises to the cell membrane. It is found in the presynaptic cell membrane. The protein resides in the synapse. Its subcellular location is the cell projection. It localises to the axon. The protein localises to the cytoplasmic vesicle. It is found in the secretory vesicle. The protein resides in the synaptic vesicle membrane. Its subcellular location is the postsynaptic density membrane. It localises to the dendritic spine. Its function is as follows. As a component of the outer core of AMPAR complex, may be involved in synaptic transmission in the central nervous system. In hippocampal neurons, in presynaptic terminals, plays an important role in the final steps of neurotransmitter release, possibly by regulating Ca(2+)-sensing. In the cerebellum, may inhibit SNARE complex formation and down-regulate short-term facilitation. The sequence is that of Proline-rich transmembrane protein 2 (PRRT2) from Homo sapiens (Human).